We begin with the raw amino-acid sequence, 378 residues long: MSGAGVAAGTRPPSSPTPGSRRRRQRPSVGVQSLRPQSPQLRQSDPQKRNLDLEKSLQFLQQQHSEMLAKLHEEIEHLKRENKDLHYKLIMNQTSQKKDGPSGNHLSRASAPLGARWVCINGVWVEPGGPSPARLKEGSSRTHRPGGKRGRLAGGSADTVRSPADSLSMSSFQSVKSISNSGKARPQPGSFNKQDSKADVSQKADLEEEPLLHNSKLDKVPGVQGQARKEKAEASNAGAACMGNSQHQGRQMGAGAHPPMILPLPLRKPTTLRQCEVLIRELWNTNLLQTQELRHLKSLLEGSQRPQAAPEEASFPRDQEATHFPKVSTKSLSKKCLSPPVAERAILPALKQTPKNNFAERQKRLQAMQKRRLHRSVL.

Disordered stretches follow at residues M1 to D52, G128 to L211, and E301 to S328. Residues L34–S44 show a composition bias toward polar residues. Residues Q47 to I90 adopt a coiled-coil conformation. Basic residues predominate over residues R141–R151. Residues D165 to G182 show a composition bias toward polar residues. Composition is skewed to basic and acidic residues over residues Q194–D205 and S314–H323.

In Homo sapiens (Human), this protein is Coiled-coil domain-containing protein 74A (CCDC74A).